The following is a 49-amino-acid chain: Large ribosomal subunit protein eL40 (49 aa).

The protein belongs to the eukaryotic ribosomal protein eL40 family.

The sequence is that of Large ribosomal subunit protein eL40 from Methanococcoides burtonii (strain DSM 6242 / NBRC 107633 / OCM 468 / ACE-M).